The following is an 807-amino-acid chain: 85/88 kDa calcium-independent phospholipase A2 (807 aa).

Ser-13 carries the phosphoserine modification. ANK repeat units follow at residues 120–147 (WTVT…ANST), 151–181 (EGCT…QMDV), 185–215 (KGET…GLNQ), 219–248 (QGLT…RCNI), 251–281 (PGGF…QIHS), 286–312 (YGAS…DVDS), 316–345 (SGNT…NAGA), 349–378 (HGNT…EVDT), and 382–403 (FGET…KALL). A run of 2 helical transmembrane segments spans residues 481–501 (LLCL…LIAI) and 512–532 (LFDW…ILHS). The PNPLA domain maps to 482–666 (LCLDGGGVKG…LANNPTLDAM (185 aa)). The GXGXXG motif lies at 486–491 (GGGVKG). The short motif at 518-522 (GTSTG) is the GXSXG element. Residue Ser-520 is the Nucleophile of the active site. Asp-653 (proton acceptor) is an active-site residue. The DGA/G signature appears at 653-655 (DGG). Positions 678–687 (RKGQGNKVKK) are calmodulin-binding (1-9-14 motif). The tract at residues 749-760 (AWCEMVGIQYFR) is calmodulin-binding (IQ motif).

As to quaternary structure, homodimer formed by catalytic domains tightly interacting through a large hydrophobic interface. The contact area involves 3 alpha helices, several loops and a part of the beta sheet from each monomer. Both active sites of the dimer are in close proximity adopting an open conformation that provide sufficient space for phospholipid access and favoring cooperativity in deacylation-reacylation reactions. Each monomer has 9 ankyrin repeats stacked side-by-side in an elongated structure oriented outwards from the catalytic core. As to expression, expressed in neurons of central and peripheral nervous system. Highly expressed in Purkinje cells in cerebellum and dorsal and ventral horn neurons in the spinal cord. Expressed in testis (at protein level). Expressed in skeletal muscle (at protein level).

It is found in the cytoplasm. Its subcellular location is the cell membrane. It localises to the mitochondrion. The protein resides in the cell projection. The protein localises to the pseudopodium. The catalysed reaction is a 1,2-diacyl-sn-glycero-3-phosphocholine + H2O = a 1-acyl-sn-glycero-3-phosphocholine + a fatty acid + H(+). The enzyme catalyses a 1-O-alkyl-2-acyl-sn-glycero-3-phosphocholine + H2O = a 1-O-alkyl-sn-glycero-3-phosphocholine + a fatty acid + H(+). It catalyses the reaction 1,2-dihexadecanoyl-sn-glycero-3-phosphocholine + H2O = 1-hexadecanoyl-sn-glycero-3-phosphocholine + hexadecanoate + H(+). It carries out the reaction 1-hexadecanoyl-2-(9Z-octadecenoyl)-sn-glycero-3-phosphocholine + H2O = 1-hexadecanoyl-sn-glycero-3-phosphocholine + (9Z)-octadecenoate + H(+). The catalysed reaction is 1-hexadecanoyl-2-(9Z,12Z-octadecadienoyl)-sn-glycero-3-phosphocholine + H2O = (9Z,12Z)-octadecadienoate + 1-hexadecanoyl-sn-glycero-3-phosphocholine + H(+). The enzyme catalyses 1-hexadecanoyl-2-(5Z,8Z,11Z,14Z-eicosatetraenoyl)-sn-glycero-3-phosphocholine + H2O = 1-hexadecanoyl-sn-glycero-3-phosphocholine + (5Z,8Z,11Z,14Z)-eicosatetraenoate + H(+). It catalyses the reaction 1-octadecanoyl-2-(5Z,8Z,11Z,14Z-eicosatetraenoyl)-sn-glycero-3-phosphocholine + H2O = 1-octadecanoyl-sn-glycero-3-phosphocholine + (5Z,8Z,11Z,14Z)-eicosatetraenoate + H(+). It carries out the reaction 1-hexadecanoyl-2-(5Z,8Z,11Z,14Z-eicosatetraenoyl)-sn-glycero-3-phosphoethanolamine + H2O = 1-hexadecanoyl-sn-glycero-3-phosphoethanolamine + (5Z,8Z,11Z,14Z)-eicosatetraenoate + H(+). The catalysed reaction is 1,2-dihexadecanoyl-sn-glycero-3-phosphate + H2O = 1-hexadecanoyl-sn-glycero-3-phosphate + hexadecanoate + H(+). The enzyme catalyses a 1-acyl-sn-glycero-3-phosphocholine + H2O = sn-glycerol 3-phosphocholine + a fatty acid + H(+). It catalyses the reaction 1-hexadecanoyl-sn-glycero-3-phosphocholine + H2O = sn-glycerol 3-phosphocholine + hexadecanoate + H(+). It carries out the reaction 1-(5Z,8Z,11Z,14Z-eicosatetraenoyl)-sn-glycero-3-phosphocholine + H2O = sn-glycerol 3-phosphocholine + (5Z,8Z,11Z,14Z)-eicosatetraenoate + H(+). The catalysed reaction is 2-(5Z,8Z,11Z,14Z)-eicosatetraenoyl-sn-glycero-3-phosphocholine + H2O = sn-glycerol 3-phosphocholine + (5Z,8Z,11Z,14Z)-eicosatetraenoate + H(+). The enzyme catalyses 1-O-hexadecyl-2-(5Z,8Z,11Z,14Z)-eicosatetraenoyl-sn-glycero-3-phosphocholine + H2O = 1-O-hexadecyl-sn-glycero-3-phosphocholine + (5Z,8Z,11Z,14Z)-eicosatetraenoate + H(+). It catalyses the reaction 1-O-hexadecyl-2-acetyl-sn-glycero-3-phosphocholine + H2O = 1-O-hexadecyl-sn-glycero-3-phosphocholine + acetate + H(+). It carries out the reaction hexadecanoyl-CoA + H2O = hexadecanoate + CoA + H(+). The catalysed reaction is 1',3'-bis[1,2-di-(9Z-octadecenoyl)-sn-glycero-3-phospho]-glycerol + H2O = 1'-[1,2-di-(9Z-octadecenoyl)-sn-glycero-3-phospho]-3'-[1-(9Z-octadecenoyl)-sn-glycero-3-phospho]-glycerol + (9Z)-octadecenoate + H(+). The enzyme catalyses 1'-[1,2-di-(9Z-octadecenoyl)-sn-glycero-3-phospho]-3'-[1-(9Z-octadecenoyl)-sn-glycero-3-phospho]-glycerol + H2O = 1',3'-bis-[1-(9Z-octadecenoyl)-sn-glycero-3-phospho]-glycerol + (9Z)-octadecenoate + H(+). It catalyses the reaction 1',3'-bis-[1,2-di-(9Z,12Z-octadecadienoyl)-sn-glycero-3-phospho]-glycerol + H2O = 1'-[1,2-di-(9Z,12Z-octadecadienoyl)-sn-glycero-3-phospho]-3'-[1-(9Z,12Z-octadecadienoyl)-sn-glycero-3-phospho]-glycerol + (9Z,12Z)-octadecadienoate + H(+). It carries out the reaction 1-octadecanoyl-2-(15-hydroxy-(5Z,8Z,11Z,13E)-eicosatetraenoyl)-sn-glycero-3-phosphoethanolamine + H2O = 1-octadecanoyl-sn-glycero-3-phosphoethanolamine + 15-hydroxy-(5Z,8Z,11Z,13E)-eicosatetraenoate + H(+). Inhibited by calcium-activated calmodulin. Activated by ATP. Inhibited by bromoenol lactone (BEL). Functionally, calcium-independent phospholipase involved in phospholipid remodeling with implications in cellular membrane homeostasis, mitochondrial integrity and signal transduction. Hydrolyzes the ester bond of the fatty acyl group attached at sn-1 or sn-2 position of phospholipids (phospholipase A1 and A2 activity respectively), producing lysophospholipids that are used in deacylation-reacylation cycles. Hydrolyzes both saturated and unsaturated long fatty acyl chains in various glycerophospholipid classes such as phosphatidylcholines, phosphatidylethanolamines and phosphatidates, with a preference for hydrolysis at sn-2 position. Can further hydrolyze lysophospholipids carrying saturated fatty acyl chains (lysophospholipase activity). Upon oxidative stress, contributes to remodeling of mitochondrial phospholipids in pancreatic beta cells, in a repair mechanism to reduce oxidized lipid content. Preferentially hydrolyzes oxidized polyunsaturated fatty acyl chains from cardiolipins, yielding monolysocardiolipins that can be reacylated with unoxidized fatty acyls to regenerate native cardiolipin species. Hydrolyzes oxidized glycerophosphoethanolamines present in pancreatic islets, releasing oxidized polyunsaturated fatty acids such as hydroxyeicosatetraenoates (HETEs). Has thioesterase activity toward fatty-acyl CoA releasing CoA-SH known to facilitate fatty acid transport and beta-oxidation in mitochondria particularly in skeletal muscle. Plays a role in regulation of membrane dynamics and homeostasis. Selectively hydrolyzes sn-2 arachidonoyl group in plasmalogen phospholipids, structural components of lipid rafts and myelin. Regulates F-actin polymerization at the pseudopods, which is required for both speed and directionality of MCP1/CCL2-induced monocyte chemotaxis. Targets membrane phospholipids to produce potent lipid signaling messengers. Generates lysophosphatidate (LPA, 1-acyl-glycerol-3-phosphate), which acts via G-protein receptors in various cell types. Has phospholipase A2 activity toward platelet-activating factor (PAF, 1-O-alkyl-2-acetyl-sn-glycero-3-phosphocholine), likely playing a role in inactivation of this potent pro-inflammatory signaling lipid. In response to glucose, amplifies calcium influx in pancreatic beta cells to promote INS secretion. The chain is 85/88 kDa calcium-independent phospholipase A2 (Pla2g6) from Mus musculus (Mouse).